The sequence spans 303 residues: Dipeptide transport system permease protein DppB (303 aa).

7 helical membrane passes run 9 to 29, 62 to 82, 93 to 113, 129 to 149, 166 to 186, 227 to 247, and 269 to 289; these read LGLL…MMQV, YFIY…IYTN, LPVS…LGAL, IFGF…GTLI, GTFS…MAVV, IPML…SVLI, and FPVI…FILV. In terms of domain architecture, ABC transmembrane type-1 spans 93–290; sequence LPVSMQLGTQ…VILMVFILVT (198 aa).

It belongs to the binding-protein-dependent transport system permease family. OppBC subfamily. In terms of assembly, the complex is composed of two ATP-binding proteins (DppD and DppF), two transmembrane proteins (DppB and DppC) and a solute-binding protein (DppA).

The protein localises to the cell membrane. Its function is as follows. Part of the ABC transporter DppABCDF involved in dipeptide transport. Responsible for the translocation of the substrate across the membrane. The chain is Dipeptide transport system permease protein DppB from Lactococcus lactis subsp. cremoris (strain MG1363).